Consider the following 485-residue polypeptide: Glutamyl-tRNA(Gln) amidotransferase subunit A (485 aa).

Residues lysine 79 and serine 154 each act as charge relay system in the active site. Serine 178 acts as the Acyl-ester intermediate in catalysis.

The protein belongs to the amidase family. GatA subfamily. In terms of assembly, heterotrimer of A, B and C subunits.

It carries out the reaction L-glutamyl-tRNA(Gln) + L-glutamine + ATP + H2O = L-glutaminyl-tRNA(Gln) + L-glutamate + ADP + phosphate + H(+). Allows the formation of correctly charged Gln-tRNA(Gln) through the transamidation of misacylated Glu-tRNA(Gln) in organisms which lack glutaminyl-tRNA synthetase. The reaction takes place in the presence of glutamine and ATP through an activated gamma-phospho-Glu-tRNA(Gln). The polypeptide is Glutamyl-tRNA(Gln) amidotransferase subunit A (Geobacillus thermodenitrificans (strain NG80-2)).